The primary structure comprises 356 residues: UDP-N-acetylglucosamine--N-acetylmuramyl-(pentapeptide) pyrophosphoryl-undecaprenol N-acetylglucosamine transferase (356 aa).

Residues 15-17 (TGG), Asn127, Arg163, Ser191, Ile244, 263-268 (ALTVSE), and Gln288 each bind UDP-N-acetyl-alpha-D-glucosamine.

Belongs to the glycosyltransferase 28 family. MurG subfamily.

It is found in the cell inner membrane. The catalysed reaction is di-trans,octa-cis-undecaprenyl diphospho-N-acetyl-alpha-D-muramoyl-L-alanyl-D-glutamyl-meso-2,6-diaminopimeloyl-D-alanyl-D-alanine + UDP-N-acetyl-alpha-D-glucosamine = di-trans,octa-cis-undecaprenyl diphospho-[N-acetyl-alpha-D-glucosaminyl-(1-&gt;4)]-N-acetyl-alpha-D-muramoyl-L-alanyl-D-glutamyl-meso-2,6-diaminopimeloyl-D-alanyl-D-alanine + UDP + H(+). Its pathway is cell wall biogenesis; peptidoglycan biosynthesis. Functionally, cell wall formation. Catalyzes the transfer of a GlcNAc subunit on undecaprenyl-pyrophosphoryl-MurNAc-pentapeptide (lipid intermediate I) to form undecaprenyl-pyrophosphoryl-MurNAc-(pentapeptide)GlcNAc (lipid intermediate II). The polypeptide is UDP-N-acetylglucosamine--N-acetylmuramyl-(pentapeptide) pyrophosphoryl-undecaprenol N-acetylglucosamine transferase (Klebsiella pneumoniae subsp. pneumoniae (strain ATCC 700721 / MGH 78578)).